Reading from the N-terminus, the 81-residue chain is Small ribosomal subunit protein bS16 (81 aa).

Belongs to the bacterial ribosomal protein bS16 family.

The polypeptide is Small ribosomal subunit protein bS16 (Teredinibacter turnerae (strain ATCC 39867 / T7901)).